Here is a 119-residue protein sequence, read N- to C-terminus: Holo-[acyl-carrier-protein] synthase (119 aa).

Mg(2+) is bound by residues aspartate 8 and glutamate 58.

Belongs to the P-Pant transferase superfamily. AcpS family. It depends on Mg(2+) as a cofactor.

The protein localises to the cytoplasm. It catalyses the reaction apo-[ACP] + CoA = holo-[ACP] + adenosine 3',5'-bisphosphate + H(+). Functionally, transfers the 4'-phosphopantetheine moiety from coenzyme A to a Ser of acyl-carrier-protein. The chain is Holo-[acyl-carrier-protein] synthase from Lactobacillus johnsonii (strain CNCM I-12250 / La1 / NCC 533).